A 154-amino-acid chain; its full sequence is Myoglobin (154 aa).

The Globin domain occupies 2–148; sequence GLSDGEWQLV…FRNDIAAKYK (147 aa). Phosphoserine is present on serine 4. Histidine 65 is a binding site for nitrite. Histidine 65 is a binding site for O2. Threonine 68 and threonine 75 each carry phosphothreonine. Histidine 94 contributes to the heme b binding site. Serine 121 is subject to Phosphoserine.

This sequence belongs to the globin family. Monomeric.

The protein localises to the cytoplasm. The protein resides in the sarcoplasm. The enzyme catalyses Fe(III)-heme b-[protein] + nitric oxide + H2O = Fe(II)-heme b-[protein] + nitrite + 2 H(+). It catalyses the reaction H2O2 + AH2 = A + 2 H2O. Monomeric heme protein which primary function is to store oxygen and facilitate its diffusion within muscle tissues. Reversibly binds oxygen through a pentacoordinated heme iron and enables its timely and efficient release as needed during periods of heightened demand. Depending on the oxidative conditions of tissues and cells, and in addition to its ability to bind oxygen, it also has a nitrite reductase activity whereby it regulates the production of bioactive nitric oxide. Under stress conditions, like hypoxia and anoxia, it also protects cells against reactive oxygen species thanks to its pseudoperoxidase activity. This chain is Myoglobin, found in Mus musculus (Mouse).